We begin with the raw amino-acid sequence, 807 residues long: Leucine-rich repeat-containing protein 41 (807 aa).

Residues 45-54 (ALFELCGRAV) are interaction with Elongin BC complex. Phosphoserine is present on residues serine 155, serine 276, and serine 326. Disordered regions lie at residues 269–290 (ASRG…RRPR), 304–335 (TRRK…AIGG), and 349–403 (ASGT…GSGA). A Phosphothreonine modification is found at threonine 327. Over residues 352–381 (TKQPSAPAAASASSSTSSKRAPASSASQPK) the composition is skewed to low complexity. Serine 368 is modified (phosphoserine). The span at 382 to 396 (PLKRFKRAAGKKGPR) shows a compositional bias: basic residues. 7 LRR repeats span residues 482–502 (WVSL…IFRL), 513–525 (AGCR…LSDL), 526–550 (FSPL…VLSI), 608–632 (SGSL…LVLQ), 638–661 (NLSL…VLFL), 696–723 (NSTL…VFSE), and 726–747 (SSSL…LLEF).

Part of an E3 ubiquitin-protein ligase complex with Elongin BC (ELOB and ELOC), RBX1 and CUL5. Component of a probable ECS(LRRC41) complex which contains CUL5, RNF7/RBX2, Elongin BC and LRRC41. Interacts with CUL5, RNF7, ELOB and ELOC.

Its pathway is protein modification; protein ubiquitination. Functionally, probable substrate recognition component of an ECS (Elongin BC-CUL2/5-SOCS-box protein) E3 ubiquitin ligase complex which mediates the ubiquitination and subsequent proteasomal degradation of target proteins. This is Leucine-rich repeat-containing protein 41 (Lrrc41) from Mus musculus (Mouse).